Consider the following 178-residue polypeptide: Cytidylate kinase (178 aa).

An ATP-binding site is contributed by 7–15 (GLPGTGTTT).

The protein belongs to the cytidylate kinase family. Type 2 subfamily.

It localises to the cytoplasm. The enzyme catalyses CMP + ATP = CDP + ADP. It carries out the reaction dCMP + ATP = dCDP + ADP. This is Cytidylate kinase (cmk) from Methanocaldococcus jannaschii (strain ATCC 43067 / DSM 2661 / JAL-1 / JCM 10045 / NBRC 100440) (Methanococcus jannaschii).